We begin with the raw amino-acid sequence, 263 residues long: Achaete-scute homolog 2 (263 aa).

Disordered stretches follow at residues 104 to 126 (RRRR…RNER) and 194 to 248 (PPSD…ELSP). Composition is skewed to low complexity over residues 110–121 (ATEASSSSAAVA), 202–220 (PSAS…SPSP), and 230–247 (SPRS…GELS). Residues 118–170 (AAVARRNERERNRVKLVNLGFQALRQHVPHGGANKKLSKVETLRSAVEYIRAL) form the bHLH domain.

In terms of assembly, efficient DNA binding requires dimerization with another basic helix-loop-helix (bHLH) protein. Forms heterodimers with bHLH transcription factor TCF3. May not heterodimerise with bHLH protein HAND1. In terms of tissue distribution, expressed in follicular T-helper (Tfh) cells.

The protein localises to the nucleus. Its function is as follows. Transcription factor. Binds to E-box motifs 5'-CANNTG-3' in the regulatory elements of target genes, probably as a heterodimer with another basic helix-loop-helix (bHLH) protein such as the transcription factor TCF3. May bind both open and closed chromatin, acting as a pioneer transcription factor to allow other factors to bind and activate lineage-specific genes. Required during post-implantation development for the generation of some differentiated trophoblast cell types. Transcriptional activity of ASCL2 may be antagonised in a subset of trophoblast cells by bHLH transcription factor HAND1, perhaps by competing for dimerization with other bHLH proteins. Involved in differentiation and function of follicular T-helper (Tfh) cells, thereby playing a role in germinal center responses; probably modulates expression of genes involved in Tfh cell function, such as BCL6. May also act as a suppressor of Th1-, Th2- and Th17-cell differentiation. Induces the formation of stem cells in intestinal crypts in vitro, synergistically activating transcription of target genes, such as SOX9, together with TCF4/beta-catenin. May form a bistable transcriptional switch, controlling expression of its own gene together with Wnt/R-spondin signaling, and thereby maintaining stem cell characteristics. Modulates expression of target genes, including perhaps down-regulating EGR1/Krox24 and chemokine CXCL10/Mob-1 and up-regulating CXCR4 and CDKN1C/p57kip2, in Schwann cells. May play a role in reducing proliferation of Schwann cells, perhaps acting via modulation of expression of CDKN1C. May be dispensable for blastocyst formation and later embryonic function. May be involved in the determination of neuronal precursors. The chain is Achaete-scute homolog 2 (Ascl2) from Mus musculus (Mouse).